The following is a 544-amino-acid chain: Methionine--tRNA ligase (544 aa).

Positions 10 to 20 (PYANGSLHLGH) match the 'HIGH' region motif. Cysteine 141, cysteine 144, cysteine 153, and cysteine 156 together coordinate Zn(2+). Residues 329-333 (KLSTS) carry the 'KMSKS' region motif. Threonine 332 contacts ATP.

It belongs to the class-I aminoacyl-tRNA synthetase family. MetG type 1 subfamily. Monomer. Requires Zn(2+) as cofactor.

The protein resides in the cytoplasm. It catalyses the reaction tRNA(Met) + L-methionine + ATP = L-methionyl-tRNA(Met) + AMP + diphosphate. In terms of biological role, is required not only for elongation of protein synthesis but also for the initiation of all mRNA translation through initiator tRNA(fMet) aminoacylation. The sequence is that of Methionine--tRNA ligase from Bacillus cereus (strain G9842).